Reading from the N-terminus, the 557-residue chain is Dihydroxy-acid dehydratase (557 aa).

Cysteine 50 serves as a coordination point for [2Fe-2S] cluster. Aspartate 82 lines the Mg(2+) pocket. [2Fe-2S] cluster is bound at residue cysteine 123. Mg(2+) contacts are provided by aspartate 124 and lysine 125. At lysine 125 the chain carries N6-carboxylysine. Cysteine 195 is a binding site for [2Fe-2S] cluster. Glutamate 447 contacts Mg(2+). Serine 473 acts as the Proton acceptor in catalysis.

It belongs to the IlvD/Edd family. As to quaternary structure, homodimer. It depends on [2Fe-2S] cluster as a cofactor. Mg(2+) serves as cofactor.

The enzyme catalyses (2R)-2,3-dihydroxy-3-methylbutanoate = 3-methyl-2-oxobutanoate + H2O. The catalysed reaction is (2R,3R)-2,3-dihydroxy-3-methylpentanoate = (S)-3-methyl-2-oxopentanoate + H2O. Its pathway is amino-acid biosynthesis; L-isoleucine biosynthesis; L-isoleucine from 2-oxobutanoate: step 3/4. It functions in the pathway amino-acid biosynthesis; L-valine biosynthesis; L-valine from pyruvate: step 3/4. Functions in the biosynthesis of branched-chain amino acids. Catalyzes the dehydration of (2R,3R)-2,3-dihydroxy-3-methylpentanoate (2,3-dihydroxy-3-methylvalerate) into 2-oxo-3-methylpentanoate (2-oxo-3-methylvalerate) and of (2R)-2,3-dihydroxy-3-methylbutanoate (2,3-dihydroxyisovalerate) into 2-oxo-3-methylbutanoate (2-oxoisovalerate), the penultimate precursor to L-isoleucine and L-valine, respectively. The polypeptide is Dihydroxy-acid dehydratase (Metallosphaera sedula (strain ATCC 51363 / DSM 5348 / JCM 9185 / NBRC 15509 / TH2)).